A 798-amino-acid chain; its full sequence is Penicillin-binding protein 1A (798 aa).

Topologically, residues 1–9 are cytoplasmic; the sequence is MIKKILTTC. The helical; Signal-anchor for type II membrane protein transmembrane segment at 10 to 30 threads the bilayer; the sequence is FGLVFGFCVFGVGLVAIAILV. Residues 31–798 are Periplasmic-facing; the sequence is TYPKLPSLDS…SKQQQLDSLF (768 aa). Residues 50-218 form a transglycosylase region; sequence LTIYSADGEV…SAYNPIVNPE (169 aa). The active-site Proton donor; for transglycosylase activity is the glutamate 88. The tract at residues 378–700 is transpeptidase; the sequence is RRALGFAARA…GTIAVPVWVD (323 aa). Catalysis depends on serine 461, which acts as the Acyl-ester intermediate; for transpeptidase activity. The tract at residues 738–798 is disordered; that stretch reads GLTLDNSGIA…SKQQQLDSLF (61 aa). The span at 768–777 shows a compositional bias: basic and acidic residues; that stretch reads AADDEVRQDM. Polar residues predominate over residues 783–798; it reads LPSNTGSKQQQLDSLF.

This sequence in the N-terminal section; belongs to the glycosyltransferase 51 family. In the C-terminal section; belongs to the transpeptidase family.

Its subcellular location is the cell inner membrane. The enzyme catalyses [GlcNAc-(1-&gt;4)-Mur2Ac(oyl-L-Ala-gamma-D-Glu-L-Lys-D-Ala-D-Ala)](n)-di-trans,octa-cis-undecaprenyl diphosphate + beta-D-GlcNAc-(1-&gt;4)-Mur2Ac(oyl-L-Ala-gamma-D-Glu-L-Lys-D-Ala-D-Ala)-di-trans,octa-cis-undecaprenyl diphosphate = [GlcNAc-(1-&gt;4)-Mur2Ac(oyl-L-Ala-gamma-D-Glu-L-Lys-D-Ala-D-Ala)](n+1)-di-trans,octa-cis-undecaprenyl diphosphate + di-trans,octa-cis-undecaprenyl diphosphate + H(+). The catalysed reaction is Preferential cleavage: (Ac)2-L-Lys-D-Ala-|-D-Ala. Also transpeptidation of peptidyl-alanyl moieties that are N-acyl substituents of D-alanine.. The protein operates within cell wall biogenesis; peptidoglycan biosynthesis. Functionally, cell wall formation. Synthesis of cross-linked peptidoglycan from the lipid intermediates. The enzyme has a penicillin-insensitive transglycosylase N-terminal domain (formation of linear glycan strands) and a penicillin-sensitive transpeptidase C-terminal domain (cross-linking of the peptide subunits). This chain is Penicillin-binding protein 1A (mrcA), found in Neisseria meningitidis serogroup A / serotype 4A (strain DSM 15465 / Z2491).